We begin with the raw amino-acid sequence, 265 residues long: Adenosylcobinamide-GDP ribazoletransferase (265 aa).

The next 7 membrane-spanning stretches (helical) occupy residues 40–60, 67–87, 121–141, 150–170, 191–211, 213–233, and 243–263; these read IAYA…VVLV, LPAF…TGAF, GGCA…ALVA, LALV…LLAL, LACA…GFGI, TAFA…RLSG, and VAGA…LIFP.

The protein belongs to the CobS family. It depends on Mg(2+) as a cofactor.

It is found in the cell inner membrane. It carries out the reaction alpha-ribazole + adenosylcob(III)inamide-GDP = adenosylcob(III)alamin + GMP + H(+). The enzyme catalyses alpha-ribazole 5'-phosphate + adenosylcob(III)inamide-GDP = adenosylcob(III)alamin 5'-phosphate + GMP + H(+). The protein operates within cofactor biosynthesis; adenosylcobalamin biosynthesis; adenosylcobalamin from cob(II)yrinate a,c-diamide: step 7/7. In terms of biological role, joins adenosylcobinamide-GDP and alpha-ribazole to generate adenosylcobalamin (Ado-cobalamin). Also synthesizes adenosylcobalamin 5'-phosphate from adenosylcobinamide-GDP and alpha-ribazole 5'-phosphate. This chain is Adenosylcobinamide-GDP ribazoletransferase, found in Xanthobacter autotrophicus (strain ATCC BAA-1158 / Py2).